Here is a 309-residue protein sequence, read N- to C-terminus: 2-phospho-L-lactate transferase (309 aa).

7,8-didemethyl-8-hydroxy-5-deazariboflavin-binding residues include Asp48 and Lys87.

Belongs to the CofD family. As to quaternary structure, homodimer. Mg(2+) is required as a cofactor.

It carries out the reaction (2S)-lactyl-2-diphospho-5'-guanosine + 7,8-didemethyl-8-hydroxy-5-deazariboflavin = oxidized coenzyme F420-0 + GMP + H(+). The protein operates within cofactor biosynthesis; coenzyme F420 biosynthesis. Catalyzes the transfer of the 2-phospholactate moiety from (2S)-lactyl-2-diphospho-5'-guanosine to 7,8-didemethyl-8-hydroxy-5-deazariboflavin (FO) with the formation of oxidized coenzyme F420-0 and GMP. The polypeptide is 2-phospho-L-lactate transferase (Methanosarcina barkeri (strain Fusaro / DSM 804)).